Here is a 571-residue protein sequence, read N- to C-terminus: Sulfite reductase [NADPH] hemoprotein beta-component (571 aa).

[4Fe-4S] cluster contacts are provided by Cys-436, Cys-442, Cys-481, and Cys-485. Residue Cys-485 coordinates siroheme.

It belongs to the nitrite and sulfite reductase 4Fe-4S domain family. Alpha(8)-beta(8). The alpha component is a flavoprotein, the beta component is a hemoprotein. It depends on siroheme as a cofactor. Requires [4Fe-4S] cluster as cofactor.

The enzyme catalyses hydrogen sulfide + 3 NADP(+) + 3 H2O = sulfite + 3 NADPH + 4 H(+). It functions in the pathway sulfur metabolism; hydrogen sulfide biosynthesis; hydrogen sulfide from sulfite (NADPH route): step 1/1. Its function is as follows. Component of the sulfite reductase complex that catalyzes the 6-electron reduction of sulfite to sulfide. This is one of several activities required for the biosynthesis of L-cysteine from sulfate. This is Sulfite reductase [NADPH] hemoprotein beta-component (cysI) from Bacillus subtilis (strain 168).